A 572-amino-acid chain; its full sequence is Probable D-xylulose kinase A (572 aa).

Histidine 95, arginine 166, aspartate 282, and asparagine 283 together coordinate substrate. ATP is bound by residues tryptophan 365, 470-471, and asparagine 474; that span reads GG.

Belongs to the FGGY kinase family.

The protein localises to the cytoplasm. The enzyme catalyses D-xylulose + ATP = D-xylulose 5-phosphate + ADP + H(+). Highly specific D-xylulose kinase which participates in the catabolism of xylose. Xylose is a major component of hemicelluloses such as xylan. Most fungi utilize D-xylose via three enzymatic reactions, xylose reductase (XR), xylitol dehydrogenase (XDH), and xylulokinase, to form xylulose 5-phosphate, which enters pentose phosphate pathway. The sequence is that of Probable D-xylulose kinase A (xkiA) from Aspergillus oryzae (strain ATCC 42149 / RIB 40) (Yellow koji mold).